A 906-amino-acid chain; its full sequence is MLSLVQKIIGSRNERFIKKVSRIVQKINSLEPEFEKLSDEQLKAKTFEYRERLANGEILDNLLPEAFATVREAGKRTKNMRHYDVQLIGGIVLHQGKVAEMKTGEGKTLVATLPAYLNALTGDGVHVITVNDYLAKRDAELMSDIYEFLGMSVGVIVADLNPQQRKEAYACDITYGTNNEFGFDYLRDNMAYEKEQQVQRSRNYVIIDEVDSILIDEARTPLIISGASDDSSEMYNLFNRLVPYLEKQEKEEVENEQEQRDFYVDEKSKNAYLTEKGYAKIENMLKKEGILEEDDNLYSPHNITKMHYLNACLRAHSLYQLNIDYIVRDQEIVIIDESTGRAMPGRRWSDGLHQAIEAKEGVKINAENQTMASITFQNFFKLYNKIAGMTGTADTEAFELHSIYGLEVIIIPTNKPMIRKDHHDEIYGSVREKFDAIVEDIKERISKGQPVLVGTASIEASEVLSTLLKKKKIRHNVLNAKQHEKEASIIAMAGYPDNVTIATNMAGRGTDIILGGNLEVEIAQLEDPTPEDIAQIKAEWLKRNEAVKKAGGLCIIGSERHDSRRIDNQLRGRAARQGDPGESKFYLSMDDNLLRIFASQSMAERVKKGLKGGESLAFGFMSKVISKAQGKVESYHFDIRKNLLEYDNVVNTQRKVIYEQRQSFLEAEDVSDILADIRIDVAEQLFHDYVSAGSMHELWDLEGLEKALKSDFMIELDLQKLYEEDDSLGEEDLKRLVREAIEIEFVEKTKNLDSGAVRQFEKFSLLQSLDTHWREHLSSIDHLRNSINLRGYAQKDPKNEYKKEAFELFSTMLDNFKYEVISSLAKIRIATEEETQRAQQEWQESMSDIKAEHESVIDNNQRHDEDEQEEAPKVQQVRREGPKVKRNDPCPCGSGKKYKQCHGKVE.

ATP contacts are provided by residues Q86, G104–T108, and D511. Composition is skewed to basic and acidic residues over residues H853 to E865 and V877 to D888. Residues H853–E906 form a disordered region. Residues C890, C892, C901, and H902 each coordinate Zn(2+). Basic residues predominate over residues K896–E906.

It belongs to the SecA family. Monomer and homodimer. Part of the essential Sec protein translocation apparatus which comprises SecA, SecYEG and auxiliary proteins SecDF-YajC and YidC. The cofactor is Zn(2+).

Its subcellular location is the cell inner membrane. It localises to the cytoplasm. It catalyses the reaction ATP + H2O + cellular proteinSide 1 = ADP + phosphate + cellular proteinSide 2.. In terms of biological role, part of the Sec protein translocase complex. Interacts with the SecYEG preprotein conducting channel. Has a central role in coupling the hydrolysis of ATP to the transfer of proteins into and across the cell membrane, serving both as a receptor for the preprotein-SecB complex and as an ATP-driven molecular motor driving the stepwise translocation of polypeptide chains across the membrane. The protein is Protein translocase subunit SecA of Francisella tularensis subsp. holarctica (strain FTNF002-00 / FTA).